The primary structure comprises 340 residues: ATP-dependent 6-phosphofructokinase (340 aa).

G11 contributes to the ATP binding site. 21-25 (RAVVR) provides a ligand contact to ADP. ATP is bound by residues 72–73 (RY) and 102–105 (GDGS). D103 provides a ligand contact to Mg(2+). 125-127 (TID) is a substrate binding site. D127 functions as the Proton acceptor in the catalytic mechanism. ADP is bound at residue R154. Residues R162 and 169–171 (MGR) contribute to the substrate site. Residues 185–187 (GAD), K211, and 213–215 (KNH) each bind ADP. Substrate-binding positions include E222, R244, and 250–253 (HIQR).

The protein belongs to the phosphofructokinase type A (PFKA) family. ATP-dependent PFK group I subfamily. Prokaryotic clade 'B1' sub-subfamily. As to quaternary structure, homotetramer. The cofactor is Mg(2+).

It is found in the cytoplasm. It carries out the reaction beta-D-fructose 6-phosphate + ATP = beta-D-fructose 1,6-bisphosphate + ADP + H(+). The protein operates within carbohydrate degradation; glycolysis; D-glyceraldehyde 3-phosphate and glycerone phosphate from D-glucose: step 3/4. Allosterically activated by ADP and other diphosphonucleosides, and allosterically inhibited by phosphoenolpyruvate. Catalyzes the phosphorylation of D-fructose 6-phosphate to fructose 1,6-bisphosphate by ATP, the first committing step of glycolysis. The protein is ATP-dependent 6-phosphofructokinase of Lactococcus lactis subsp. lactis (Streptococcus lactis).